The chain runs to 286 residues: uncharacterized protein (286 aa).

Positions Met1–Ala31 form a signal peptide, tat-type signal. Residues Asp65, His67, Asp97, Asn130, His221, and His223 each contribute to the a divalent metal cation site.

Belongs to the metallophosphoesterase superfamily. It depends on a divalent metal cation as a cofactor. Post-translationally, predicted to be exported by the Tat system. The position of the signal peptide cleavage has not been experimentally proven.

This is an uncharacterized protein from Bacillus subtilis (strain 168).